The following is a 674-amino-acid chain: Secretin GspD (674 aa).

The signal sequence occupies residues 1–24 (MKYWLKKSSWLLAGSLLSTPLAMA). The tract at residues 25–121 (NEFSASFKGT…VLSGEERANG (97 aa)) is N0. The segment at 123-187 (EVITQVVAVK…EIIRRVDQAG (65 aa)) is N1. Residues 188–261 (DKEIEVVELN…LIKQLDVEMA (74 aa)) are N2. Residues 264–338 (GNNRVVYLKY…AMLEVIGQLD (75 aa)) form an N3 region. Residues 343 to 612 (QVLIEALIVE…VFIKPTIIRD (270 aa)) are secretin. Positions 395 to 417 (DTTQTKAVYDTNNNFLRNETTTT) are cap gate. Residues 614-674 (VTADGITQRK…AFIEQMEAKQ (61 aa)) are s domain.

This sequence belongs to the bacterial secretin family. GSP D subfamily. As to quaternary structure, forms a cylindrical channel with 15 subunits; unlike E.coli no 16-subunit channels are seen. The closed pentadeacameric channels are 195 Angstroms long and 145 Angstroms in diameter. Each subunit turns in a clock-wise manner around the channel.

The protein resides in the cell outer membrane. Functionally, involved in a type II secretion system (T2SS, formerly general secretion pathway, GSP) for the export of proteins. Required for secretion of cholera toxin through the outer membrane. This subunit forms the outer membrane channel. This is Secretin GspD (epsD) from Vibrio cholerae serotype O1 (strain ATCC 39315 / El Tor Inaba N16961).